We begin with the raw amino-acid sequence, 357 residues long: tRNA/tmRNA (uracil-C(5))-methyltransferase (357 aa).

Gln185, Tyr212, Asn217, Glu233, and Asp291 together coordinate S-adenosyl-L-methionine. The active-site Nucleophile is Cys316. Residue Glu350 is the Proton acceptor of the active site.

This sequence belongs to the class I-like SAM-binding methyltransferase superfamily. RNA M5U methyltransferase family. TrmA subfamily.

It catalyses the reaction uridine(54) in tRNA + S-adenosyl-L-methionine = 5-methyluridine(54) in tRNA + S-adenosyl-L-homocysteine + H(+). It carries out the reaction uridine(341) in tmRNA + S-adenosyl-L-methionine = 5-methyluridine(341) in tmRNA + S-adenosyl-L-homocysteine + H(+). In terms of biological role, dual-specificity methyltransferase that catalyzes the formation of 5-methyluridine at position 54 (m5U54) in all tRNAs, and that of position 341 (m5U341) in tmRNA (transfer-mRNA). The chain is tRNA/tmRNA (uracil-C(5))-methyltransferase from Campylobacter hominis (strain ATCC BAA-381 / DSM 21671 / CCUG 45161 / LMG 19568 / NCTC 13146 / CH001A).